Reading from the N-terminus, the 341-residue chain is tRNA N6-adenosine threonylcarbamoyltransferase (341 aa).

Fe cation contacts are provided by His111 and His115. Residues 134 to 138 (LVSGG), Asp167, Gly180, and Asn276 each bind substrate. Asp304 serves as a coordination point for Fe cation.

The protein belongs to the KAE1 / TsaD family. Fe(2+) serves as cofactor.

The protein localises to the cytoplasm. The catalysed reaction is L-threonylcarbamoyladenylate + adenosine(37) in tRNA = N(6)-L-threonylcarbamoyladenosine(37) in tRNA + AMP + H(+). Its function is as follows. Required for the formation of a threonylcarbamoyl group on adenosine at position 37 (t(6)A37) in tRNAs that read codons beginning with adenine. Is involved in the transfer of the threonylcarbamoyl moiety of threonylcarbamoyl-AMP (TC-AMP) to the N6 group of A37, together with TsaE and TsaB. TsaD likely plays a direct catalytic role in this reaction. In Pseudomonas aeruginosa (strain LESB58), this protein is tRNA N6-adenosine threonylcarbamoyltransferase.